Here is a 268-residue protein sequence, read N- to C-terminus: Glutamate racemase (268 aa).

Substrate-binding positions include 10-11 (DS) and 42-43 (YG). The active-site Proton donor/acceptor is the Cys73. Substrate is bound at residue 74–75 (NT). Residue Cys184 is the Proton donor/acceptor of the active site. Position 185–186 (185–186 (TH)) interacts with substrate.

Belongs to the aspartate/glutamate racemases family.

It carries out the reaction L-glutamate = D-glutamate. It participates in cell wall biogenesis; peptidoglycan biosynthesis. Functionally, provides the (R)-glutamate required for cell wall biosynthesis. In Limosilactobacillus fermentum (strain NBRC 3956 / LMG 18251) (Lactobacillus fermentum), this protein is Glutamate racemase.